The sequence spans 326 residues: Putative HTH-type transcriptional regulatory protein MMP0678 (326 aa).

Positions 128-183 (LRETREKLKISVGELAEVSRVSRKTIYKYEQNEANPSAEVAIKIEEYLDVPLIKGI) constitute an HTH cro/C1-type domain. The H-T-H motif DNA-binding region spans 139–158 (VGELAEVSRVSRKTIYKYEQ).

The sequence is that of Putative HTH-type transcriptional regulatory protein MMP0678 from Methanococcus maripaludis (strain DSM 14266 / JCM 13030 / NBRC 101832 / S2 / LL).